A 3373-amino-acid polypeptide reads, in one-letter code: Intermembrane lipid transfer protein vps13A (3373 aa).

Residues 3–119 form the Chorein N-terminal domain; the sequence is FEGLVSDVLS…QAELKKKKLE (117 aa). 5 disordered regions span residues 818–858, 1028–1096, 1259–1304, 1648–1729, and 1872–1913; these read PKAT…VNSS, VPIN…KTAS, NNNK…DLEK, DPSI…EEEK, and QKKR…GKKD. Residues 823-839 show a composition bias toward polar residues; that stretch reads TPINDSNSPSSVSPKLI. Composition is skewed to low complexity over residues 840–858 and 1048–1066; these read STSP…VNSS and SSPN…QSPQ. 2 stretches are compositionally biased toward basic and acidic residues: residues 1263–1274 and 1288–1304; these read SIEKSKSIDSKL and RSDD…DLEK. Composition is skewed to low complexity over residues 1659–1685, 1695–1716, and 1884–1898; these read QQQQ…RSQS, SSIG…SLSS, and SSST…STNS. Residues 1899 to 1909 show a composition bias toward polar residues; that stretch reads FQTSTSGNSNS. Positions 2405 to 2706 constitute an SHR-BD domain; that stretch reads TLSFYCQYWL…CYGWDEPSAE (302 aa). Residues 2909–2933 form a disordered region; the sequence is RGNNASNNNNNNGMTSSQMRQSGSG. The segment covering 2911 to 2920 has biased composition (low complexity); it reads NNASNNNNNN.

It belongs to the VPS13 family.

The protein resides in the membrane. Mediates the transfer of lipids between membranes at organelle contact sites. The protein is Intermembrane lipid transfer protein vps13A (vps13A) of Dictyostelium discoideum (Social amoeba).